We begin with the raw amino-acid sequence, 581 residues long: Bifunctional lycopene cyclase/phytoene synthase (581 aa).

The segment at 1 to 243 is lycopene beta-cyclase; the sequence is MGFDYALVHL…IVFGQLAFDN (243 aa). 7 helical membrane-spanning segments follow: residues 3 to 23, 35 to 55, 65 to 85, 120 to 140, 152 to 172, 173 to 193, and 221 to 241; these read FDYALVHLKYTIPPAVLLTLL, KVAFLVTIAVVATIPWDSYLI, HVIIGPTLFDIPLEEVFFFVV, LKRLIGQAILLGAIAWGWFCV, ILIWAGPFLLLLWSLAYQFII, GLPFTNTLLPIVLPTLYLWIV, and IEEALFFLLTNVLIVFGQLAF. The interval 250-581 is phytoene synthase; the sequence is AFPHLFPDPS…RVLVAWRTLN (332 aa).

In the N-terminal section; belongs to the lycopene beta-cyclase family. It in the C-terminal section; belongs to the phytoene/squalene synthase family.

The protein resides in the membrane. The catalysed reaction is all-trans-lycopene = gamma-carotene. It carries out the reaction gamma-carotene = all-trans-beta-carotene. The enzyme catalyses 2 (2E,6E,10E)-geranylgeranyl diphosphate = 15-cis-phytoene + 2 diphosphate. The protein operates within carotenoid biosynthesis; beta-carotene biosynthesis. Its pathway is carotenoid biosynthesis; phytoene biosynthesis; all-trans-phytoene from geranylgeranyl diphosphate: step 1/1. Functionally, bifunctional enzyme that catalyzes the reactions from geranylgeranyl diphosphate to phytoene (phytoene synthase) and lycopene to beta-carotene via the intermediate gamma-carotene (lycopene cyclase). In Leptosphaeria maculans (strain JN3 / isolate v23.1.3 / race Av1-4-5-6-7-8) (Blackleg fungus), this protein is Bifunctional lycopene cyclase/phytoene synthase.